The primary structure comprises 306 residues: Ribokinase (306 aa).

Residues 12–14 (NAD), 40–44 (GKGAN), and Glu141 each bind substrate. Residues Asn185 and 221-226 (TLGAKG) each bind ATP. Residues Asp247 and Thr249 each coordinate K(+). An ATP-binding site is contributed by 252–253 (GD). Asp253 is a substrate binding site. The active-site Proton acceptor is the Asp253. Ser283, Lys286, Gly288, and Ser292 together coordinate K(+).

Belongs to the carbohydrate kinase PfkB family. Ribokinase subfamily. As to quaternary structure, homodimer. Requires Mg(2+) as cofactor.

It localises to the cytoplasm. The catalysed reaction is D-ribose + ATP = D-ribose 5-phosphate + ADP + H(+). Its pathway is carbohydrate metabolism; D-ribose degradation; D-ribose 5-phosphate from beta-D-ribopyranose: step 2/2. Its activity is regulated as follows. Activated by a monovalent cation that binds near, but not in, the active site. The most likely occupant of the site in vivo is potassium. Ion binding induces a conformational change that may alter substrate affinity. Its function is as follows. Catalyzes the phosphorylation of ribose at O-5 in a reaction requiring ATP and magnesium. The resulting D-ribose-5-phosphate can then be used either for sythesis of nucleotides, histidine, and tryptophan, or as a component of the pentose phosphate pathway. This Haemophilus influenzae (strain ATCC 51907 / DSM 11121 / KW20 / Rd) protein is Ribokinase.